Reading from the N-terminus, the 228-residue chain is Ribonuclease 3 (228 aa).

One can recognise an RNase III domain in the interval 5–127 (LTALQERLKH…LIGAVYLDAG (123 aa)). Glu40 contacts Mg(2+). The active site involves Asp44. Positions 113 and 116 each coordinate Mg(2+). Glu116 is an active-site residue. The region spanning 154-224 (DPKTELQEWL…AAAMLIRLKA (71 aa)) is the DRBM domain.

The protein belongs to the ribonuclease III family. In terms of assembly, homodimer. It depends on Mg(2+) as a cofactor.

Its subcellular location is the cytoplasm. It catalyses the reaction Endonucleolytic cleavage to 5'-phosphomonoester.. In terms of biological role, digests double-stranded RNA. Involved in the processing of primary rRNA transcript to yield the immediate precursors to the large and small rRNAs (23S and 16S). Processes some mRNAs, and tRNAs when they are encoded in the rRNA operon. Processes pre-crRNA and tracrRNA of type II CRISPR loci if present in the organism. The sequence is that of Ribonuclease 3 from Variovorax paradoxus (strain S110).